A 143-amino-acid chain; its full sequence is Ribosome-binding factor A (143 aa).

Residues Asp-123–Arg-143 form a disordered region.

Belongs to the RbfA family. Monomer. Binds 30S ribosomal subunits, but not 50S ribosomal subunits or 70S ribosomes.

Its subcellular location is the cytoplasm. In terms of biological role, one of several proteins that assist in the late maturation steps of the functional core of the 30S ribosomal subunit. Associates with free 30S ribosomal subunits (but not with 30S subunits that are part of 70S ribosomes or polysomes). Required for efficient processing of 16S rRNA. May interact with the 5'-terminal helix region of 16S rRNA. This chain is Ribosome-binding factor A, found in Francisella tularensis subsp. novicida (strain U112).